We begin with the raw amino-acid sequence, 302 residues long: Sulfate adenylyltransferase subunit 2 (302 aa).

It belongs to the PAPS reductase family. CysD subfamily. As to quaternary structure, heterodimer composed of CysD, the smaller subunit, and CysN.

It catalyses the reaction sulfate + ATP + H(+) = adenosine 5'-phosphosulfate + diphosphate. Its pathway is sulfur metabolism; hydrogen sulfide biosynthesis; sulfite from sulfate: step 1/3. With CysN forms the ATP sulfurylase (ATPS) that catalyzes the adenylation of sulfate producing adenosine 5'-phosphosulfate (APS) and diphosphate, the first enzymatic step in sulfur assimilation pathway. APS synthesis involves the formation of a high-energy phosphoric-sulfuric acid anhydride bond driven by GTP hydrolysis by CysN coupled to ATP hydrolysis by CysD. The sequence is that of Sulfate adenylyltransferase subunit 2 from Shewanella pealeana (strain ATCC 700345 / ANG-SQ1).